Reading from the N-terminus, the 1462-residue chain is MGARNSVLRGKKADELEKVRLRPGGKKKYKLKHIVWAANELDRFGLAESLLESKEGCQRILKVLDPLVPTGSENLKSLFNTVCVIWCIHAEEKVKDTEEAKRIALRHLAAETGTAEKMPDTSRPTAPPSGKGGNYPVQSIGGNYTHVPLSPRTLNAWVKLVEEKKFGAEVVPGFQALSEGCTPYDINQMLNCVGDHQAAMQIIREIINEEAADWDANHPIPGPLPAGQLRDPRGSDIAGTTSTVEEQIQWMFRAQNPVPVGNIYRRWIQIGLQKCVRMYNPTNILDIKQGPKESFQSYVDRFYKSLRAEQTDPAVKNWMTQTLLVQNANPDCKLVLKGLGMNPTLEEMLTACQGVGGPGQKARLMAEALKEAMGPPPIPFAAAQQRRTIKCWNCGKEGHSARQCRAPRRQGCWKCGKPGHIMTNCPDRQAGFLRDWPLGKEAPQFPRGPSSTGANTNSTPIGSSSGSTGEIYAAREKAEGAETETIQRGDRGLTAPRTRRGPMQGDNRGLAAPQFSLWKRPVVTAHIEGQPVEVLLDTGADDSIVAGIELGSNYSPKIVGGIGGFINTKEYKNVEIEVLGKRVRATIMTGDTPINIFGRNILTALGMSLNLPVAKIEPIKIMLKPGKDGPRLRQWPLTKEKIEALKEICEKMEKEGQLEEAPPTNPYNTPTFAIRKKDKNKWRMLIDFRELNKVTQDFTEIQLGIPHPAGLAKKRRITVLDVGDAYFSIPLHEDFRQYTAFTLPSVNNAEPGKRYIYKVLPQGWKGSPAIFQYTMRQVLEPFRKANSDVIIIQYMDDILIASDRTDLEHDKVVLQLKELLNNLGFSTPDEKFQKDPPYRWMGYELWPTKWKLQKIQLPQKEVWTVNDIQKLVGVLNWAAQIYPGIKTKHLCRLIRGKMTLTEEVQWTELAEAELEENRIILSQEQEGHYYQEEKELEATVQKDQDNQWTYKIHQEEKILKVGKYAKIKHTHTNGVKLLAQVVQKIGKEALVIGRIPKFHLPVEREVWEQWWDNYWQVTWIPDWDFVSTPPLVRLAFNLVGDPIPGTETFYTDGSCNRQSKEGKAGYVTDRGRDKVKILEQTTNQQAELEAFAMALTDSGPKANIIVDSQYVMGIVAGQPTESENRIVNQIIEEMIKKEAIYVAWVPAHKGIGGNQEVDHLVSQGIRQVLFLEKIEPAQEEHEKYHTNVKELCHKFDIPQLVARQIVNTCAQYQQKGEAIHGQVNAEVGTWQMDCTHLEGKIIIVAVHVASGFIEAEVIPQESGRQTALFLLKLASRWPITHLHTDNGANFTSQEVKMVAWWVGIEQTFGVPYNPQSQGVVEAMNHHLKNQISRIREQANTVETIVLMAVHCMNFKRRGGIGDMTPSERLINMITTEQEIQFLQAKNSKLKNFRVYFREGRDQLWKGPGELLWKGDGAVIVKVGTDIKIIPRRKAKIIRDYGGRQELDSSSHLEGARENGEVA.

A lipid anchor (N-myristoyl glycine; by host) is attached at Gly-2. Residues Val-7–Leu-31 are interaction with Gp41. The short motif at Leu-16–Arg-22 is the Nuclear export signal element. The short motif at Lys-26–Lys-32 is the Nuclear localization signal element. A disordered region spans residues Glu-111 to Pro-136. Residue Tyr-135 is modified to Phosphotyrosine; by host. An interaction with human PPIA/CYPA and NUP153 region spans residues Asn-191 to Gln-228. Residues Tyr-279–Met-365 are dimerization/Multimerization of capsid protein p24. 2 consecutive CCHC-type zinc fingers follow at residues Ile-389–Ala-406 and Gln-410–Asp-427. The interval Gly-439–Leu-510 is disordered. Over residues Thr-456–Gly-469 the composition is skewed to low complexity. The span at Ala-473 to Arg-491 shows a compositional bias: basic and acidic residues. The interval Pro-513–Leu-517 is dimerization of protease. The 70-residue stretch at Val-532–Ile-601 folds into the Peptidase A2 domain. Catalysis depends on Asp-537, which acts as the For protease activity; shared with dimeric partner. Dimerization of protease regions lie at residues Gly-561 to Asn-567 and Asn-600 to Pro-612. Residues Glu-655–Leu-845 enclose the Reverse transcriptase domain. Asp-721, Asp-796, and Asp-797 together coordinate Mg(2+). The interval Tyr-838–Trp-846 is RT 'primer grip'. Residues Trp-1007–Trp-1023 carry the Tryptophan repeat motif motif. An RNase H type-1 domain is found at Ile-1043–Arg-1166. Residues Asp-1052, Glu-1087, Asp-1107, and Asp-1158 each coordinate Mg(2+). The segment at Glu-1172–Gln-1213 adopts an Integrase-type; degenerate zinc-finger fold. Positions Gln-1222 to Ile-1373 constitute an Integrase catalytic domain. Mg(2+)-binding residues include Asp-1233, Asp-1285, and Glu-1321. Positions Phe-1392–Asp-1439 form a DNA-binding region, integrase-type.

In terms of assembly, homotrimer; further assembles as hexamers of trimers. Interacts with gp41 (via C-terminus). Interacts with host CALM1; this interaction induces a conformational change in the Matrix protein, triggering exposure of the myristate group. Interacts with host AP3D1; this interaction allows the polyprotein trafficking to multivesicular bodies during virus assembly. Part of the pre-integration complex (PIC) which is composed of viral genome, matrix protein, Vpr and integrase. As to quaternary structure, homodimer; the homodimer further multimerizes as homohexamers or homopentamers. Interacts with human PPIA/CYPA. Interacts with human NUP153. Interacts with host PDZD8; this interaction stabilizes the capsid. Interacts with monkey TRIM5; this interaction destabilizes the capsid. Homodimer, whose active site consists of two apposed aspartic acid residues. In terms of assembly, heterodimer of p66 RT and p51 RT (RT p66/p51). Heterodimerization of RT is essential for DNA polymerase activity. The overall folding of the subdomains is similar in p66 RT and p51 RT but the spatial arrangements of the subdomains are dramatically different. As to quaternary structure, homotetramer; may further associate as a homohexadecamer. Part of the pre-integration complex (PIC) which is composed of viral genome, matrix protein, Vpr and integrase. Interacts with human SMARCB1/INI1 and human PSIP1/LEDGF isoform 1. Interacts with human KPNA3; this interaction might play a role in nuclear import of the pre-integration complex. Interacts with human NUP153; this interaction might play a role in nuclear import of the pre-integration complex. Requires Mg(2+) as cofactor. In terms of processing, specific enzymatic cleavages by the viral protease yield mature proteins. The protease is released by autocatalytic cleavage. The polyprotein is cleaved during and after budding, this process is termed maturation. Proteolytic cleavage of p66 RT removes the RNase H domain to yield the p51 RT subunit. Nucleocapsid protein p7 might be further cleaved after virus entry.

Its subcellular location is the host cell membrane. It localises to the host endosome. The protein resides in the host multivesicular body. It is found in the virion membrane. The protein localises to the host nucleus. Its subcellular location is the host cytoplasm. It localises to the virion. The enzyme catalyses Endopeptidase for which the P1 residue is preferably hydrophobic.. It catalyses the reaction Endohydrolysis of RNA in RNA/DNA hybrids. Three different cleavage modes: 1. sequence-specific internal cleavage of RNA. Human immunodeficiency virus type 1 and Moloney murine leukemia virus enzymes prefer to cleave the RNA strand one nucleotide away from the RNA-DNA junction. 2. RNA 5'-end directed cleavage 13-19 nucleotides from the RNA end. 3. DNA 3'-end directed cleavage 15-20 nucleotides away from the primer terminus.. It carries out the reaction 3'-end directed exonucleolytic cleavage of viral RNA-DNA hybrid.. The catalysed reaction is DNA(n) + a 2'-deoxyribonucleoside 5'-triphosphate = DNA(n+1) + diphosphate. Protease: The viral protease is inhibited by many synthetic protease inhibitors (PIs), such as amprenavir, atazanavir, indinavir, loprinavir, nelfinavir, ritonavir and saquinavir. Use of protease inhibitors in tritherapy regimens permit more ambitious therapeutic strategies. Reverse transcriptase/ribonuclease H: RT can be inhibited either by nucleoside RT inhibitors (NRTIs) or by non nucleoside RT inhibitors (NNRTIs). NRTIs act as chain terminators, whereas NNRTIs inhibit DNA polymerization by binding a small hydrophobic pocket near the RT active site and inducing an allosteric change in this region. Classical NRTIs are abacavir, adefovir (PMEA), didanosine (ddI), lamivudine (3TC), stavudine (d4T), tenofovir (PMPA), zalcitabine (ddC), and zidovudine (AZT). Classical NNRTIs are atevirdine (BHAP U-87201E), delavirdine, efavirenz (DMP-266), emivirine (I-EBU), and nevirapine (BI-RG-587). The tritherapies used as a basic effective treatment of AIDS associate two NRTIs and one NNRTI. In terms of biological role, mediates, with Gag polyprotein, the essential events in virion assembly, including binding the plasma membrane, making the protein-protein interactions necessary to create spherical particles, recruiting the viral Env proteins, and packaging the genomic RNA via direct interactions with the RNA packaging sequence (Psi). Gag-Pol polyprotein may regulate its own translation, by the binding genomic RNA in the 5'-UTR. At low concentration, the polyprotein would promote translation, whereas at high concentration, the polyprotein would encapsidate genomic RNA and then shut off translation. Its function is as follows. Targets the polyprotein to the plasma membrane via a multipartite membrane-binding signal, that includes its myristoylated N-terminus. Matrix protein is part of the pre-integration complex. Implicated in the release from host cell mediated by Vpu. Binds to RNA. Forms the conical core that encapsulates the genomic RNA-nucleocapsid complex in the virion. Most core are conical, with only 7% tubular. The core is constituted by capsid protein hexamer subunits. The core is disassembled soon after virion entry. Host restriction factors such as TRIM5-alpha or TRIMCyp bind retroviral capsids and cause premature capsid disassembly, leading to blocks in reverse transcription. Capsid restriction by TRIM5 is one of the factors which restricts HIV-1 to the human species. Host PIN1 apparently facilitates the virion uncoating. On the other hand, interactions with PDZD8 or CYPA stabilize the capsid. Functionally, encapsulates and protects viral dimeric unspliced genomic RNA (gRNA). Binds these RNAs through its zinc fingers. Acts as a nucleic acid chaperone which is involved in rearangement of nucleic acid secondary structure during gRNA retrotranscription. Also facilitates template switch leading to recombination. As part of the polyprotein, participates in gRNA dimerization, packaging, tRNA incorporation and virion assembly. In terms of biological role, aspartyl protease that mediates proteolytic cleavages of Gag and Gag-Pol polyproteins during or shortly after the release of the virion from the plasma membrane. Cleavages take place as an ordered, step-wise cascade to yield mature proteins. This process is called maturation. Displays maximal activity during the budding process just prior to particle release from the cell. Also cleaves Nef and Vif, probably concomitantly with viral structural proteins on maturation of virus particles. Hydrolyzes host EIF4GI and PABP1 in order to shut off the capped cellular mRNA translation. The resulting inhibition of cellular protein synthesis serves to ensure maximal viral gene expression and to evade host immune response. Its function is as follows. Multifunctional enzyme that converts the viral RNA genome into dsDNA in the cytoplasm, shortly after virus entry into the cell. This enzyme displays a DNA polymerase activity that can copy either DNA or RNA templates, and a ribonuclease H (RNase H) activity that cleaves the RNA strand of RNA-DNA heteroduplexes in a partially processive 3' to 5' endonucleasic mode. Conversion of viral genomic RNA into dsDNA requires many steps. A tRNA(3)-Lys binds to the primer-binding site (PBS) situated at the 5'-end of the viral RNA. RT uses the 3' end of the tRNA primer to perform a short round of RNA-dependent minus-strand DNA synthesis. The reading proceeds through the U5 region and ends after the repeated (R) region which is present at both ends of viral RNA. The portion of the RNA-DNA heteroduplex is digested by the RNase H, resulting in a ssDNA product attached to the tRNA primer. This ssDNA/tRNA hybridizes with the identical R region situated at the 3' end of viral RNA. This template exchange, known as minus-strand DNA strong stop transfer, can be either intra- or intermolecular. RT uses the 3' end of this newly synthesized short ssDNA to perform the RNA-dependent minus-strand DNA synthesis of the whole template. RNase H digests the RNA template except for two polypurine tracts (PPTs) situated at the 5'-end and near the center of the genome. It is not clear if both polymerase and RNase H activities are simultaneous. RNase H probably can proceed both in a polymerase-dependent (RNA cut into small fragments by the same RT performing DNA synthesis) and a polymerase-independent mode (cleavage of remaining RNA fragments by free RTs). Secondly, RT performs DNA-directed plus-strand DNA synthesis using the PPTs that have not been removed by RNase H as primers. PPTs and tRNA primers are then removed by RNase H. The 3' and 5' ssDNA PBS regions hybridize to form a circular dsDNA intermediate. Strand displacement synthesis by RT to the PBS and PPT ends produces a blunt ended, linear dsDNA copy of the viral genome that includes long terminal repeats (LTRs) at both ends. Catalyzes viral DNA integration into the host chromosome, by performing a series of DNA cutting and joining reactions. This enzyme activity takes place after virion entry into a cell and reverse transcription of the RNA genome in dsDNA. The first step in the integration process is 3' processing. This step requires a complex comprising the viral genome, matrix protein, Vpr and integrase. This complex is called the pre-integration complex (PIC). The integrase protein removes 2 nucleotides from each 3' end of the viral DNA, leaving recessed CA OH's at the 3' ends. In the second step, the PIC enters cell nucleus. This process is mediated through integrase and Vpr proteins, and allows the virus to infect a non dividing cell. This ability to enter the nucleus is specific of lentiviruses, other retroviruses cannot and rely on cell division to access cell chromosomes. In the third step, termed strand transfer, the integrase protein joins the previously processed 3' ends to the 5' ends of strands of target cellular DNA at the site of integration. The 5'-ends are produced by integrase-catalyzed staggered cuts, 5 bp apart. A Y-shaped, gapped, recombination intermediate results, with the 5'-ends of the viral DNA strands and the 3' ends of target DNA strands remaining unjoined, flanking a gap of 5 bp. The last step is viral DNA integration into host chromosome. This involves host DNA repair synthesis in which the 5 bp gaps between the unjoined strands are filled in and then ligated. Since this process occurs at both cuts flanking the HIV genome, a 5 bp duplication of host DNA is produced at the ends of HIV-1 integration. Alternatively, Integrase may catalyze the excision of viral DNA just after strand transfer, this is termed disintegration. The sequence is that of Gag-Pol polyprotein (gag-pol) from Homo sapiens (Human).